The sequence spans 184 residues: Ribosome-recycling factor (184 aa).

Belongs to the RRF family.

It localises to the cytoplasm. In terms of biological role, responsible for the release of ribosomes from messenger RNA at the termination of protein biosynthesis. May increase the efficiency of translation by recycling ribosomes from one round of translation to another. This chain is Ribosome-recycling factor, found in Bifidobacterium adolescentis (strain ATCC 15703 / DSM 20083 / NCTC 11814 / E194a).